Reading from the N-terminus, the 150-residue chain is Transcriptional regulator MraZ (150 aa).

2 SpoVT-AbrB domains span residues 7–58 (KEQH…EPEI) and 87–130 (LDSV…SPEK).

This sequence belongs to the MraZ family. Forms oligomers.

The protein resides in the cytoplasm. Its subcellular location is the nucleoid. The polypeptide is Transcriptional regulator MraZ (Chlorobium phaeobacteroides (strain BS1)).